Here is a 338-residue protein sequence, read N- to C-terminus: MIHLAGFTCCLGGVALYLLTRSTGRDIKSITRVYQLKDLEQLVEVESKVVPLIIAVSGDVGSETPIKCEHSYVLGVFLKRTAEQQVLRRNWRFSWVRNSTLMQPMTKEVPWYLDDGTGRVNVDVSQGELGLALTVGSDVFEKAEPVSLVQGALGYLKGFKILGVRHVERVVPIGTPLTVVGEAVRDGMGNVRIQKPEQGPFYVTYIPLDQLISKLGDLSRRFKYASMGLTVLGVILISKPVIEYILKRIEDTLERRRRQFALKRVVDAAARRAKPVTGGGTSRDGDTPDLCVVCLDQKYNTAFVECGHMCCCTPCSLQLRTCPLCRERIQQVLKIYRH.

The helical transmembrane segment at 1-21 (MIHLAGFTCCLGGVALYLLTR) threads the bilayer. The Chloroplast intermembrane segment spans residues 22–223 (STGRDIKSIT…KLGDLSRRFK (202 aa)). The helical transmembrane segment at 224–246 (YASMGLTVLGVILISKPVIEYIL) threads the bilayer. The Cytoplasmic segment spans residues 247–338 (KRIEDTLERR…IQQVLKIYRH (92 aa)). The segment at 291-326 (CVVCLDQKYNTAFVECGHMCCCTPCSLQLRTCPLCR) adopts an RING-type zinc-finger fold.

The protein localises to the plastid. It is found in the chloroplast outer membrane. The catalysed reaction is S-ubiquitinyl-[E2 ubiquitin-conjugating enzyme]-L-cysteine + [acceptor protein]-L-lysine = [E2 ubiquitin-conjugating enzyme]-L-cysteine + N(6)-ubiquitinyl-[acceptor protein]-L-lysine.. It participates in protein modification; protein ubiquitination. Its function is as follows. Possesses E3 ubiquitin-protein ligase activity. The sequence is that of E3 ubiquitin-protein ligase SPL1 from Arabidopsis thaliana (Mouse-ear cress).